Consider the following 144-residue polypeptide: Large ribosomal subunit protein eL27 (144 aa).

This sequence belongs to the eukaryotic ribosomal protein eL27 family.

It is found in the cytoplasm. The chain is Large ribosomal subunit protein eL27 (RPL27) from Tetrahymena thermophila.